The chain runs to 100 residues: Large ribosomal subunit protein uL23 (100 aa).

This sequence belongs to the universal ribosomal protein uL23 family. In terms of assembly, part of the 50S ribosomal subunit. Contacts protein L29, and trigger factor when it is bound to the ribosome.

In terms of biological role, one of the early assembly proteins it binds 23S rRNA. One of the proteins that surrounds the polypeptide exit tunnel on the outside of the ribosome. Forms the main docking site for trigger factor binding to the ribosome. This is Large ribosomal subunit protein uL23 from Buchnera aphidicola subsp. Schizaphis graminum (strain Sg).